The sequence spans 93 residues: Small ribosomal subunit protein uS19 (93 aa).

It belongs to the universal ribosomal protein uS19 family.

Protein S19 forms a complex with S13 that binds strongly to the 16S ribosomal RNA. In Geotalea uraniireducens (strain Rf4) (Geobacter uraniireducens), this protein is Small ribosomal subunit protein uS19.